Here is a 226-residue protein sequence, read N- to C-terminus: Membrane protein (226 aa).

The Virion surface segment spans residues 1–11; that stretch reads MSNGSIPVDEV. Residues 12–32 traverse the membrane as a helical segment; it reads IEHLRNWNFTWNIILTILLVV. Residues 33 to 41 lie on the Intravirion side of the membrane; that stretch reads LQYGHYKYS. Residues 42-62 traverse the membrane as a helical segment; it reads VFLYGVKMAILWILWPLVLAL. Residues 63–75 are Virion surface-facing; that stretch reads SLFDAWASFQVNW. The chain crosses the membrane as a helical span at residues 76–96; the sequence is VFFAFSILMACITLMLWIMYF. Topologically, residues 97–226 are intravirion; it reads VNSIRLWRRT…TDSEKVPHLV (130 aa). Residues 200–216 are interaction with N protein; that stretch reads RSKHGDYSAVSNPSAVL.

It belongs to the alphacoronaviruses M protein family. In terms of assembly, homomultimer. Interacts with envelope E protein in the budding compartment of the host cell, which is located between endoplasmic reticulum and the Golgi complex. Forms a complex with HE and S proteins. Interacts with nucleocapsid N protein. This interaction probably participates in RNA packaging into the virus.

The protein resides in the virion membrane. It localises to the host Golgi apparatus membrane. Functionally, component of the viral envelope that plays a central role in virus morphogenesis and assembly via its interactions with other viral proteins. The protein is Membrane protein of Sus scrofa (Pig).